The chain runs to 516 residues: rRNA N(6)-adenosine-methyltransferase ZCCHC4 (516 aa).

The Zn(2+) site is built by Cys40, His42, Cys66, Cys75, Cys127, Cys130, His142, and His145. The GRF-type zinc-finger motif lies at 40-84; the sequence is CPHELGPTLLFVKVNQGKEETRRFYACSACRDRKDCNFFQWEDEK. S-adenosyl-L-methionine-binding positions include 174–177, Arg204, Asp227, 245–246, and Asp278; these read QYLF and NM. Residues 339–360 are regulatory loop; the sequence is QVVDYDNHALYKHGKTGRKQSP. Residues Cys383, Cys386, His396, Cys397, Cys400, Cys403, His413, Cys414, Cys417, Cys420, His427, Cys428, Cys431, Cys434, His439, and Cys441 each coordinate Zn(2+). The 51-residue stretch at 398–448 folds into the DHHC domain; that stretch reads EHCNSCTSKDGRKWNHCFLCKKCVKPSWIHCSICNHCALPDHSCKGPKDGC. The segment at 446 to 463 adopts a CCHC-type zinc-finger fold; that stretch reads DGCFICGELDHKRSACPN. The segment covering 472–484 has biased composition (basic residues); it reads KAVRKQKQRKSNK. The segment at 472–516 is disordered; it reads KAVRKQKQRKSNKMKMETTKGQSMNHTSATRKKKRRERTHQYLCS. Residues 490–499 show a composition bias toward polar residues; sequence TKGQSMNHTS. Residues 500 to 509 show a composition bias toward basic residues; the sequence is ATRKKKRRER.

This sequence belongs to the ZCCHC4 family. As to quaternary structure, interacts with components of the ASC-1 complex TRIP4, ASCC1, ASCC2 and ASCC3. Interact with AHCYL1 and AHCYL2. Interact with YTHDC2.

The protein localises to the cytoplasm. The protein resides in the nucleus. Its subcellular location is the nucleolus. It catalyses the reaction adenosine(4220) in 28S rRNA + S-adenosyl-L-methionine = N(6)-methyladenosine(4220) in 28S rRNA + S-adenosyl-L-homocysteine + H(+). In terms of biological role, rRNA N6-methyltransferase that specifically methylates the adenine in position 4220 of 28S rRNA. N6-methylation of adenine(4220) in 28S rRNA is required for translation. This chain is rRNA N(6)-adenosine-methyltransferase ZCCHC4, found in Bos taurus (Bovine).